The primary structure comprises 31 residues: Alpha-conotoxin Li1.12 (31 aa).

The propeptide occupies 1-15; sequence AGNAKMSALMALTIR. 2 disulfides stabilise this stretch: cysteine 17-cysteine 23 and cysteine 18-cysteine 30. At cysteine 30 the chain carries Cysteine amide.

Belongs to the conotoxin A superfamily. In terms of tissue distribution, expressed by the venom duct.

The protein localises to the secreted. Its function is as follows. Alpha-conotoxins act on postsynaptic membranes, they bind to the nicotinic acetylcholine receptors (nAChR) and thus inhibit them. This toxin inhibits alpha-3-beta-4, alpha-6/alpha-3-beta-4, and alpha-2-beta-4 nAChRs. The chain is Alpha-conotoxin Li1.12 from Conus lividus (Livid cone).